A 320-amino-acid chain; its full sequence is Alpha/beta hydrolase domain-containing protein 17C (320 aa).

The disordered stretch occupies residues 50-75 (RAPAPAATPAPAPAAQPAPAEEGAGP). The segment covering 55–65 (AATPAPAPAAQ) has biased composition (pro residues). Active-site charge relay system residues include serine 202, aspartate 267, and histidine 296.

It belongs to the AB hydrolase superfamily. ABHD17 family. Palmitoylated on cysteine residues located in a cysteine cluster at the N-terminus which promotes membrane localization. Palmitoylation is required for post-synaptic localization and for depalmitoylating activity towards DLG4/PSD95.

The protein localises to the recycling endosome membrane. The protein resides in the cell projection. Its subcellular location is the dendritic spine. It localises to the postsynaptic density membrane. It catalyses the reaction S-hexadecanoyl-L-cysteinyl-[protein] + H2O = L-cysteinyl-[protein] + hexadecanoate + H(+). Its function is as follows. Hydrolyzes fatty acids from S-acylated cysteine residues in proteins. Has depalmitoylating activity towards DLG4/PSD95. The polypeptide is Alpha/beta hydrolase domain-containing protein 17C (Mus musculus (Mouse)).